The primary structure comprises 200 residues: Phosphoheptose isomerase (200 aa).

The 163-residue stretch at 37–199 (VLGCITAGGK…DVQLLGEQDL (163 aa)) folds into the SIS domain. 52–54 (NGG) serves as a coordination point for substrate. Residues histidine 61 and glutamate 65 each coordinate Zn(2+). Residues glutamate 65, 94-95 (ND), 120-122 (TTS), serine 125, and glutamine 175 contribute to the substrate site. Zn(2+) is bound by residues glutamine 175 and histidine 183.

It belongs to the SIS family. GmhA subfamily. As to quaternary structure, homotetramer. It depends on Zn(2+) as a cofactor.

The protein localises to the cytoplasm. It carries out the reaction 2 D-sedoheptulose 7-phosphate = D-glycero-alpha-D-manno-heptose 7-phosphate + D-glycero-beta-D-manno-heptose 7-phosphate. The protein operates within carbohydrate biosynthesis; D-glycero-D-manno-heptose 7-phosphate biosynthesis; D-glycero-alpha-D-manno-heptose 7-phosphate and D-glycero-beta-D-manno-heptose 7-phosphate from sedoheptulose 7-phosphate: step 1/1. In terms of biological role, catalyzes the isomerization of sedoheptulose 7-phosphate in D-glycero-D-manno-heptose 7-phosphate. The polypeptide is Phosphoheptose isomerase (Methylibium petroleiphilum (strain ATCC BAA-1232 / LMG 22953 / PM1)).